The following is a 268-amino-acid chain: Energy-coupling factor transporter transmembrane protein EcfT (268 aa).

Transmembrane regions (helical) follow at residues 26 to 46 (ILAVLFYMVMVFLANSPLSYG), 47 to 67 (ILIGFIVLGAALAKLPAGLLL), 73 to 93 (LWIIILLTMVIHFVTDPGEAL), 116 to 136 (LVLLLLVSSLMTFTTSPIVLT), 151 to 171 (VPAHELAMMMTIALRFIPTLL), and 246 to 266 (ALTGLVMLALFVLLAFLRWGI).

This sequence belongs to the energy-coupling factor EcfT family. As to quaternary structure, forms a stable energy-coupling factor (ECF) transporter complex composed of 2 membrane-embedded substrate-binding proteins (S component), 2 ATP-binding proteins (A component) and 2 transmembrane proteins (T component). May be able to interact with more than 1 S component at a time.

The protein localises to the cell membrane. In terms of biological role, transmembrane (T) component of an energy-coupling factor (ECF) ABC-transporter complex. Unlike classic ABC transporters this ECF transporter provides the energy necessary to transport a number of different substrates. The chain is Energy-coupling factor transporter transmembrane protein EcfT from Acidaminococcus fermentans (strain ATCC 25085 / DSM 20731 / CCUG 9996 / CIP 106432 / VR4).